The primary structure comprises 363 residues: tRNA N6-adenosine threonylcarbamoyltransferase (363 aa).

His121 and His125 together coordinate Fe cation. Residues 143 to 147 (LASGG), Asp176, Gly189, and Asn287 each bind substrate. Residue Asp315 coordinates Fe cation.

Belongs to the KAE1 / TsaD family. It depends on Fe(2+) as a cofactor.

Its subcellular location is the cytoplasm. The catalysed reaction is L-threonylcarbamoyladenylate + adenosine(37) in tRNA = N(6)-L-threonylcarbamoyladenosine(37) in tRNA + AMP + H(+). Functionally, required for the formation of a threonylcarbamoyl group on adenosine at position 37 (t(6)A37) in tRNAs that read codons beginning with adenine. Is involved in the transfer of the threonylcarbamoyl moiety of threonylcarbamoyl-AMP (TC-AMP) to the N6 group of A37, together with TsaE and TsaB. TsaD likely plays a direct catalytic role in this reaction. The chain is tRNA N6-adenosine threonylcarbamoyltransferase from Rhodopseudomonas palustris (strain BisB5).